A 468-amino-acid chain; its full sequence is Glutamate--tRNA ligase 2 (468 aa).

Positions 9–19 (PSPTGHLHIGG) match the 'HIGH' region motif. 4 residues coordinate Zn(2+): C98, C100, C125, and H127. The 'KMSKS' region signature appears at 236–240 (RLSKR). ATP is bound at residue K239.

This sequence belongs to the class-I aminoacyl-tRNA synthetase family. Glutamate--tRNA ligase type 1 subfamily. Monomer. Requires Zn(2+) as cofactor.

It localises to the cytoplasm. It catalyses the reaction tRNA(Glu) + L-glutamate + ATP = L-glutamyl-tRNA(Glu) + AMP + diphosphate. Functionally, catalyzes the attachment of glutamate to tRNA(Glu) in a two-step reaction: glutamate is first activated by ATP to form Glu-AMP and then transferred to the acceptor end of tRNA(Glu). The chain is Glutamate--tRNA ligase 2 from Methylococcus capsulatus (strain ATCC 33009 / NCIMB 11132 / Bath).